A 41-amino-acid chain; its full sequence is Plantazolicin (41 aa).

Positions 1-27 are excised as a propeptide; it reads MTQIKVPTALIASVHGEGQHLFEPMAA. Arginine 28 carries the post-translational modification N2,N2-dimethylarginine. Positions 28 to 29 form a cross-link, thiazole-4-carboxylic acid (Arg-Cys); sequence RC. 2 cross-links (5-methyloxazole-4-carboxylic acid (Cys-Thr)) span residues 29-30 and 31-32; these read CT. Residues 30 to 31 constitute a cross-link (thiazole-4-carboxylic acid (Thr-Cys)); that stretch reads TC. A cross-link (5-methyloxazole-4-carboxylic acid (Thr-Thr)) is located at residues 32-33; that stretch reads TT. A cross-link (oxazole-4-carboxylic acid (Ile-Ser)) is located at residues 35–36; sequence IS. 3 consecutive cross-links (oxazole-4-carboxylic acid (Ser-Ser)) follow at residues 36-37, 37-38, and 38-39; these read SS. Residues 39–40 constitute a cross-link (5-methyloxazoline-4-carboxylic acid (Ser-Thr)); the sequence is ST.

Post-translationally, maturation of thiazole and oxazole containing antibiotics involves the enzymatic condensation of a Cys, Ser or Thr with the alpha-carbonyl of the preceding amino acid to form a thioether or ether bond, then dehydration to form a double bond with the alpha-amino nitrogen. Thiazoline or oxazoline ring are dehydrogenated to form thiazole or oxazole rings. 2 forms exist: plantazolicin A and plantazolicin B. The structural difference between them is a dimethylation at Arg-28 in plantazolicin A.

It is found in the secreted. The protein localises to the cell wall. Its function is as follows. Peptide antibiotic inhibiting growth of Gram-positive bacteria in the dimethylated form plantazolicin A. The desmethyl form plantazolicin B has no antibiotic activity. The mode of action appears to be disruption of cell walls and lysis of cells. Inhibits B.subtilis strain HB0042, B.megaterium strain 7A1 and B.anthracis (MIC=2-4 ug/ml). Weakly inhibits Gram-positive bacteria B.brevis strain ATCC 8246, B.subtilis strain 168, B.cereus strain ATCC 14579 and strain CU1065, B.licheniformis strain ATCC 9789, M.luteus, B.sphaericus, P.granivorans and S.pyogenes (MIC=128 ug/ml). Does not inhibit B.pumilus, P.polymyxa, Arthrobacter sp., S.aureus, vancomycin-resistant E.faecalis, L.monocytogenes, methicillin-resistant S.aureus or Gram-negative bacteria E.coli strain K12, K.terrigena, Pseudomonas sp. and E.carotovora. The polypeptide is Plantazolicin (Bacillus velezensis (strain DSM 23117 / BGSC 10A6 / LMG 26770 / FZB42) (Bacillus amyloliquefaciens subsp. plantarum)).